We begin with the raw amino-acid sequence, 2116 residues long: Unconventional myosin-VIIb (2116 aa).

In terms of domain architecture, Myosin motor spans 65–760; that stretch reads QGVDDMIRLG…QDTLLEVQRS (696 aa). 158–165 provides a ligand contact to ATP; that stretch reads GESGAGKT. Positions 637–659 are actin-binding; it reads LDQLMKILTNCQPYFIRCIKPNE. IQ domains lie at 745 to 765, 763 to 792, 786 to 815, 814 to 834, 832 to 861, and 855 to 884; these read IFLR…VLDR, LDRA…AAVT, QRRA…GFER, ERLQ…AMRQ, MRQR…AVVV, and KRRA…NAPL. Serine 904 is modified (phosphoserine). The segment at 916-1542 is mediates interaction with ANKS4B; that stretch reads EKVFGFLPAM…KKQGLLASEN (627 aa). The 204-residue stretch at 989 to 1192 folds into the MyTH4 1 domain; the sequence is HIRRPLRYPL…PTWLELQAVK (204 aa). An FERM 1 domain is found at 1197–1506; it reads IPIQVILATG…EGLKERSIFA (310 aa). Residue serine 1371 is modified to Phosphoserine. The 67-residue stretch at 1501 to 1567 folds into the SH3 domain; the sequence is ERSIFAMALQ…PMACLYTIPT (67 aa). The interval 1501-2116 is mediates interaction with CDHR2, CDHR5 and USH1C; sequence ERSIFAMALQ…GSKAPALAST (616 aa). 2 MyTH4 domains span residues 1644–1793 and 1790–1896; these read YSCE…EAAE and EAAE…KLWL. The residue at position 1645 (serine 1645) is a Phosphoserine. The FERM 2 domain occupies 1799-2102; the sequence is ICHKIYFPND…SYVQQLLSAM (304 aa).

It belongs to the TRAFAC class myosin-kinesin ATPase superfamily. Myosin family. As to quaternary structure, part of the IMAC/intermicrovillar adhesion complex/intermicrovillar tip-link complex composed of ANKS4B, MYO7B, USH1C, CDHR2 and CDHR5. Interacts with CDHR2. Interacts with CDHR5. Interacts with USH1C. Interacts with ANKS4B; requires initial interaction with USH1C. Interacts with CALML4; the interaction mediates the association of CALML4 with the IMAC/intermicrovillar adhesion complex.

The protein localises to the cytoplasm. It is found in the cytoskeleton. The protein resides in the cell projection. Its subcellular location is the microvillus. In terms of biological role, myosins are actin-based motor molecules with ATPase activity. Their highly divergent tails are presumed to bind to membranous compartments, which would be moved relative to actin filaments. As part of the intermicrovillar adhesion complex/IMAC plays a role in epithelial brush border differentiation, controlling microvilli organization and length. May link the complex to the actin core bundle of microvilli. The polypeptide is Unconventional myosin-VIIb (Homo sapiens (Human)).